Here is a 1342-residue protein sequence, read N- to C-terminus: DNA-directed RNA polymerase subunit beta (1342 aa).

Belongs to the RNA polymerase beta chain family. As to quaternary structure, the RNAP catalytic core consists of 2 alpha, 1 beta, 1 beta' and 1 omega subunit. When a sigma factor is associated with the core the holoenzyme is formed, which can initiate transcription.

It carries out the reaction RNA(n) + a ribonucleoside 5'-triphosphate = RNA(n+1) + diphosphate. Its function is as follows. DNA-dependent RNA polymerase catalyzes the transcription of DNA into RNA using the four ribonucleoside triphosphates as substrates. This chain is DNA-directed RNA polymerase subunit beta, found in Serratia proteamaculans (strain 568).